A 71-amino-acid chain; its full sequence is Large ribosomal subunit protein uL29 (71 aa).

The protein belongs to the universal ribosomal protein uL29 family.

The protein is Large ribosomal subunit protein uL29 of Rickettsia africae (strain ESF-5).